A 264-amino-acid polypeptide reads, in one-letter code: Thymidylate synthase (264 aa).

Arg-21 contributes to the dUMP binding site. His-51 is a binding site for (6R)-5,10-methylene-5,6,7,8-tetrahydrofolate. DUMP is bound at residue 126–127 (RR). The active-site Nucleophile is the Cys-146. DUMP is bound by residues 166–169 (RSCD), Asn-177, and 207–209 (HLY). Asp-169 is a (6R)-5,10-methylene-5,6,7,8-tetrahydrofolate binding site. Ala-263 is a (6R)-5,10-methylene-5,6,7,8-tetrahydrofolate binding site.

Belongs to the thymidylate synthase family. Bacterial-type ThyA subfamily. As to quaternary structure, homodimer.

It localises to the cytoplasm. The enzyme catalyses dUMP + (6R)-5,10-methylene-5,6,7,8-tetrahydrofolate = 7,8-dihydrofolate + dTMP. It functions in the pathway pyrimidine metabolism; dTTP biosynthesis. Catalyzes the reductive methylation of 2'-deoxyuridine-5'-monophosphate (dUMP) to 2'-deoxythymidine-5'-monophosphate (dTMP) while utilizing 5,10-methylenetetrahydrofolate (mTHF) as the methyl donor and reductant in the reaction, yielding dihydrofolate (DHF) as a by-product. This enzymatic reaction provides an intracellular de novo source of dTMP, an essential precursor for DNA biosynthesis. This chain is Thymidylate synthase, found in Shewanella sp. (strain ANA-3).